Reading from the N-terminus, the 85-residue chain is Large ribosomal subunit protein bL27 (85 aa).

Residues 1–24 (MAHKKAGGSSRNGRDSHSKRLGVK) form a disordered region.

Belongs to the bacterial ribosomal protein bL27 family.

This Nitrosomonas eutropha (strain DSM 101675 / C91 / Nm57) protein is Large ribosomal subunit protein bL27.